A 1588-amino-acid chain; its full sequence is RB1-inducible coiled-coil protein 1 (1588 aa).

Residues S222, S229, and S237 each carry the phosphoserine modification. A Phosphothreonine modification is found at T238. A phosphoserine mark is found at S243, S253, S257, and S261. Residues 565–568 (KPRK) carry the Nuclear localization signal motif. S623, S646, S649, S652, S733, S1087, S1366, and S1478 each carry phosphoserine. The tract at residues 638 to 674 (QKVSTSQASPQSAASPRIESTTGITTTTSPKTPPPLT) is disordered. Residues 643–667 (SQASPQSAASPRIESTTGITTTTSP) are compositionally biased toward low complexity. An FFAT motif is present at residues 730-736 (DFMSAVN). 2 coiled-coil regions span residues 858-1393 (LKEK…TSSF) and 1440-1479 (SVQE…SQSL).

In terms of assembly, part of a complex containing ATG13/KIAA0652, ULK1 and RB1CC1. This complex associates with ATG101. Interacts with PTK2/FAK1 and PTK2B/PYK2. Interacts with GABARAP and GABARAPL1. Interacts with ATG16L1; the interaction is required for ULK1 complex-dependent autophagy. Interacts with RNF111, SKI and SMAD7. Interacts with COP1 in the cytoplasm of proliferating cells in response to UV stimulation. Interacts with TP53. Interacts with C9orf72. Interacts with WDR45B. Interacts with ATG13; this interaction is increased in the absence of TMEM39A. Interacts with WIPI2. Interacts with TAX1BP1. Interacts (via phosphorylated FFAT motif) with MOSPD2. Post-translationally, phosphorylation at Ser-733 of the FFAT motif activates interaction with MOSPD2. In terms of tissue distribution, expressed abundantly in heart and testis, and moderately in kidney, liver and skeletal muscles. Very low expression levels in lung and spleen. Colocalizes with RB1 in various tissues.

Its subcellular location is the nucleus. It localises to the cytoplasm. The protein resides in the cytosol. The protein localises to the preautophagosomal structure. It is found in the lysosome. Functionally, involved in autophagy. Regulates early events but also late events of autophagosome formation through direct interaction with Atg16L1. Required for the formation of the autophagosome-like double-membrane structure that surrounds the Salmonella-containing vacuole (SCV) during S.typhimurium infection and subsequent xenophagy. Involved in repair of DNA damage caused by ionizing radiation, which subsequently improves cell survival by decreasing apoptosis. Inhibits PTK2/FAK1 and PTK2B/PYK2 kinase activity, affecting their downstream signaling pathways. Plays a role as a modulator of TGF-beta-signaling by restricting substrate specificity of RNF111. Functions as a DNA-binding transcription factor. Is a potent regulator of the RB1 pathway through induction of RB1 expression. Plays a crucial role in muscular differentiation. Plays an indispensable role in fetal hematopoiesis and in the regulation of neuronal homeostasis. This is RB1-inducible coiled-coil protein 1 from Mus musculus (Mouse).